The sequence spans 358 residues: Cyclin-dependent kinase 10 (358 aa).

A Protein kinase domain is found at 37–321; sequence FEKLNRIGEG…AGDCLESSYF (285 aa). ATP is bound by residues 43 to 51 and K66; that span reads IGEGTYGIV. Residue D161 is the Proton acceptor of the active site. Residue T194 is modified to Phosphothreonine. The disordered stretch occupies residues 332 to 358; it reads LMPTFPHHRNKRAAPAATEGQSKRCRP.

The protein belongs to the protein kinase superfamily. CMGC Ser/Thr protein kinase family. CDC2/CDKX subfamily. Heterodimer with CCNQ, the interaction is required for kinase activity. Interacts with ETS2. Interacts with PRK2.

The protein localises to the cytoplasm. Its subcellular location is the cytoskeleton. It localises to the cilium basal body. The enzyme catalyses L-seryl-[protein] + ATP = O-phospho-L-seryl-[protein] + ADP + H(+). The catalysed reaction is L-threonyl-[protein] + ATP = O-phospho-L-threonyl-[protein] + ADP + H(+). Cyclin-dependent kinase that phosphorylates the transcription factor ETS2 (in vitro) and positively controls its proteasomal degradation (in cells). Involved in the regulation of actin cytoskeleton organization through the phosphorylation of actin dynamics regulators such as PKN2. Is a negative regulator of ciliogenesis through phosphorylation of PKN2 and promotion of RhoA signaling. The protein is Cyclin-dependent kinase 10 (Cdk10) of Rattus norvegicus (Rat).